We begin with the raw amino-acid sequence, 180 residues long: Large ribosomal subunit protein uL6 (180 aa).

It belongs to the universal ribosomal protein uL6 family. In terms of assembly, part of the 50S ribosomal subunit.

In terms of biological role, this protein binds to the 23S rRNA, and is important in its secondary structure. It is located near the subunit interface in the base of the L7/L12 stalk, and near the tRNA binding site of the peptidyltransferase center. This is Large ribosomal subunit protein uL6 from Dictyoglomus turgidum (strain DSM 6724 / Z-1310).